A 656-amino-acid chain; its full sequence is DNA mismatch repair protein MutL (656 aa).

This sequence belongs to the DNA mismatch repair MutL/HexB family.

Functionally, this protein is involved in the repair of mismatches in DNA. It is required for dam-dependent methyl-directed DNA mismatch repair. May act as a 'molecular matchmaker', a protein that promotes the formation of a stable complex between two or more DNA-binding proteins in an ATP-dependent manner without itself being part of a final effector complex. In Lactococcus lactis subsp. lactis (strain IL1403) (Streptococcus lactis), this protein is DNA mismatch repair protein MutL.